Reading from the N-terminus, the 232-residue chain is Large ribosomal subunit protein uL1 (232 aa).

The protein belongs to the universal ribosomal protein uL1 family. Part of the 50S ribosomal subunit.

Functionally, binds directly to 23S rRNA. The L1 stalk is quite mobile in the ribosome, and is involved in E site tRNA release. Protein L1 is also a translational repressor protein, it controls the translation of the L11 operon by binding to its mRNA. The sequence is that of Large ribosomal subunit protein uL1 from Coxiella burnetii (strain RSA 331 / Henzerling II).